A 302-amino-acid polypeptide reads, in one-letter code: tRNA dimethylallyltransferase (302 aa).

ATP is bound at residue 9–16 (GATATGKS). Substrate is bound at residue 11–16 (TATGKS). The interval 34-37 (DSRQ) is interaction with substrate tRNA.

Belongs to the IPP transferase family. Monomer. The cofactor is Mg(2+).

It catalyses the reaction adenosine(37) in tRNA + dimethylallyl diphosphate = N(6)-dimethylallyladenosine(37) in tRNA + diphosphate. Its function is as follows. Catalyzes the transfer of a dimethylallyl group onto the adenine at position 37 in tRNAs that read codons beginning with uridine, leading to the formation of N6-(dimethylallyl)adenosine (i(6)A). The protein is tRNA dimethylallyltransferase of Nostoc punctiforme (strain ATCC 29133 / PCC 73102).